Reading from the N-terminus, the 115-residue chain is Large ribosomal subunit protein bL19 (115 aa).

It belongs to the bacterial ribosomal protein bL19 family.

Functionally, this protein is located at the 30S-50S ribosomal subunit interface and may play a role in the structure and function of the aminoacyl-tRNA binding site. In Hydrogenovibrio crunogenus (strain DSM 25203 / XCL-2) (Thiomicrospira crunogena), this protein is Large ribosomal subunit protein bL19.